The sequence spans 296 residues: Glycine N-acyltransferase (296 aa).

N6-acetyllysine; alternate is present on residues Lys-16, Lys-127, and Lys-141. N6-succinyllysine; alternate occurs at positions 16, 127, and 141. Lys-159 carries the post-translational modification N6-acetyllysine. Lys-169 is subject to N6-succinyllysine. 2 positions are modified to N6-acetyllysine; alternate: Lys-183 and Lys-256. Residues Lys-183 and Lys-256 each carry the N6-succinyllysine; alternate modification.

Belongs to the glycine N-acyltransferase family. As to expression, predominantly expressed in liver (at protein level) and kidney. Down-regulated in hepatocellular carcinoma and other liver cancers.

It is found in the mitochondrion. The catalysed reaction is an acyl-CoA + glycine = an N-acylglycine + CoA + H(+). It catalyses the reaction benzoyl-CoA + glycine = N-benzoylglycine + CoA + H(+). In terms of biological role, mitochondrial acyltransferase which transfers an acyl group to the N-terminus of glycine and glutamine, although much less efficiently. Can conjugate numerous substrates to form a variety of N-acylglycines, with a preference for benzoyl-CoA over phenylacetyl-CoA as acyl donors. Thereby detoxify xenobiotics, such as benzoic acid or salicylic acid, and endogenous organic acids, such as isovaleric acid. In Homo sapiens (Human), this protein is Glycine N-acyltransferase (GLYAT).